Consider the following 139-residue polypeptide: MKKGTVLNSEISSVISRLGHTDTLVVCDAGLPIPNSTARIDIALTQGVPSFMQVVDVVTREMQVEAAILATEIKQQNPQLHETLLTHLEQLQQHQGNTIKISYTTHEQFKKLTADSQAVIRSGECSPYANVILCAGVTF.

The active-site Proton donor is His20. Residues Asp28, His106, and 128–130 contribute to the substrate site; that span reads YAN.

Belongs to the RbsD / FucU family. RbsD subfamily. In terms of assembly, homodecamer.

The protein resides in the cytoplasm. It catalyses the reaction beta-D-ribopyranose = beta-D-ribofuranose. The protein operates within carbohydrate metabolism; D-ribose degradation; D-ribose 5-phosphate from beta-D-ribopyranose: step 1/2. In terms of biological role, catalyzes the interconversion of beta-pyran and beta-furan forms of D-ribose. In Salmonella agona (strain SL483), this protein is D-ribose pyranase.